Consider the following 929-residue polypeptide: Valine--tRNA ligase (929 aa).

The 'HIGH' region motif lies at 40–50 (PNVTGHLHMGH). Positions 522 to 526 (KMSKS) match the 'KMSKS' region motif. Residue K525 participates in ATP binding. The stretch at 855–926 (LAGLIDKEAE…LEQQHAEITD (72 aa)) forms a coiled coil.

The protein belongs to the class-I aminoacyl-tRNA synthetase family. ValS type 1 subfamily. Monomer.

It localises to the cytoplasm. It catalyses the reaction tRNA(Val) + L-valine + ATP = L-valyl-tRNA(Val) + AMP + diphosphate. Functionally, catalyzes the attachment of valine to tRNA(Val). As ValRS can inadvertently accommodate and process structurally similar amino acids such as threonine, to avoid such errors, it has a 'posttransfer' editing activity that hydrolyzes mischarged Thr-tRNA(Val) in a tRNA-dependent manner. The sequence is that of Valine--tRNA ligase from Nitrosococcus oceani (strain ATCC 19707 / BCRC 17464 / JCM 30415 / NCIMB 11848 / C-107).